A 471-amino-acid chain; its full sequence is MSQIVTRFAPSPTGFLHIGGARTALFNWLYARHTGGKMLLRIEDTDRQRSTKEAIAAIIEGLEWLGITCDGDPIYQFARAERHRAAVEEMLAKGNAYRCYATPQELDEMRELARKEGRPPRYDGRWRDRDPSEAPKDRDPVIRLRAPQEGETVIDDMVQGTVTFPNKDLDDLVLLRSDGNPTYMLAVVVDDHDMGVTHVIRGDDHLTNAARQTQIYRALGWEVPRMAHIPLIHGPDGAKLSKRHGALGVDAYRDMGYLPAALRNYLVRLGWSHGDQEVFSTEEMVSFFDLDKVGRSAARFDFQKLESLNGHYMRASSDAELLSAIDALVPHLPDAEHRLARMTPERRAQLAAAMPGLKERAKTLVELVDNAEFIFVERPLPLDDKAAALLSPEARAHLARLVPALEQVEWTAAATEAAVRAYAEAQGVKLGAVAQPLRAALTGKPTSPPIFDVLMVLGRDESLARLKDQAA.

The short motif at 10–20 (PSPTGFLHIGG) is the 'HIGH' region element. Residues 113–140 (ARKEGRPPRYDGRWRDRDPSEAPKDRDP) are disordered. A 'KMSKS' region motif is present at residues 239–243 (KLSKR). Position 242 (Lys242) interacts with ATP.

The protein belongs to the class-I aminoacyl-tRNA synthetase family. Glutamate--tRNA ligase type 1 subfamily. Monomer.

The protein resides in the cytoplasm. It carries out the reaction tRNA(Glu) + L-glutamate + ATP = L-glutamyl-tRNA(Glu) + AMP + diphosphate. Functionally, catalyzes the attachment of glutamate to tRNA(Glu) in a two-step reaction: glutamate is first activated by ATP to form Glu-AMP and then transferred to the acceptor end of tRNA(Glu). This is Glutamate--tRNA ligase 1 from Xanthobacter autotrophicus (strain ATCC BAA-1158 / Py2).